A 163-amino-acid polypeptide reads, in one-letter code: MSLLLLVVSALHILILILLFVATLDKSWWTLPGKESLNLWYDCTWNNDTKTWACSNVSENGWLKAVQVLMVLSLILCCLSFILFMFQLYTMRRGGLFYATGLCQLCTSVAVFTGALIYAIHAEEILEKHPRGGSFGYCFALAWVAFPLALVSGIIYIHLRKRE.

The helical transmembrane segment at 4 to 24 (LLLVVSALHILILILLFVATL) threads the bilayer. Residues Asn47 and Asn56 are each glycosylated (N-linked (GlcNAc...) asparagine). The next 3 membrane-spanning stretches (helical) occupy residues 66-86 (VQVL…LFMF), 100-120 (TGLC…IYAI), and 139-159 (FALA…YIHL).

It belongs to the PMP-22/EMP/MP20 family.

It localises to the membrane. Its function is as follows. Probably involved in cell proliferation and cell-cell interactions. The protein is Epithelial membrane protein 3 (EMP3) of Homo sapiens (Human).